The sequence spans 745 residues: Exocyst complex component 3 (745 aa).

An N6-acetyllysine modification is found at Lys28.

This sequence belongs to the SEC6 family. In terms of assembly, the exocyst complex is composed of EXOC1, EXOC2, EXOC3, EXOC4, EXOC5, EXOC6, EXOC7 and EXOC8. Interacts with EXOC3L1. Interacts with BIRC6/bruce. Interacts with MYRIP. Interacts with SLC6A9. Expressed in epididymis (at protein level).

It localises to the cytoplasm. The protein resides in the perinuclear region. Its subcellular location is the cell projection. It is found in the growth cone. The protein localises to the midbody. It localises to the golgi apparatus. The protein resides in the neuron projection. Its function is as follows. Component of the exocyst complex involved in the docking of exocytic vesicles with fusion sites on the plasma membrane. This chain is Exocyst complex component 3 (EXOC3), found in Homo sapiens (Human).